The sequence spans 128 residues: Large ribosomal subunit protein bL21 (128 aa).

The disordered stretch occupies residues 104 to 128 (GKTPTVGPRPKKEKVVEPAEGEGDH). A compositionally biased stretch (basic and acidic residues) spans 116–128 (EKVVEPAEGEGDH).

This sequence belongs to the bacterial ribosomal protein bL21 family. In terms of assembly, part of the 50S ribosomal subunit. Contacts protein L20.

Functionally, this protein binds to 23S rRNA in the presence of protein L20. In Nitrobacter hamburgensis (strain DSM 10229 / NCIMB 13809 / X14), this protein is Large ribosomal subunit protein bL21.